Consider the following 689-residue polypeptide: Beta-galactosidase Pbg (689 aa).

Residue R118 coordinates substrate. Residue C122 coordinates Zn(2+). N156 is a binding site for substrate. E157 acts as the Proton donor in catalysis. 3 residues coordinate Zn(2+): C162, C164, and C167. E318 acts as the Nucleophile in catalysis. Residues W326 and 366-369 (EKFH) contribute to the substrate site.

This sequence belongs to the glycosyl hydrolase 42 family.

It carries out the reaction Hydrolysis of terminal non-reducing beta-D-galactose residues in beta-D-galactosides.. This is Beta-galactosidase Pbg from Clostridium perfringens (strain ATCC 13124 / DSM 756 / JCM 1290 / NCIMB 6125 / NCTC 8237 / Type A).